The chain runs to 878 residues: Probable glucan endo-1,3-beta-glucosidase ARB_02077 (878 aa).

The N-terminal stretch at 1-27 (MARGLVSSLLLGQLLLVLVGLFSPAGA) is a signal peptide. N-linked (GlcNAc...) asparagine glycosylation is found at Asn-228, Asn-257, Asn-290, and Asn-297. The interval 373 to 472 (AGSGSKAKRL…TACPSAPVTK (100 aa)) is disordered. Pro residues predominate over residues 400–416 (APAPQPPAQSTAPPYPI). A compositionally biased stretch (low complexity) spans 433–452 (VPTRVPTGGVPSGTTGTAPS). Residues Asn-505, Asn-659, Asn-795, and Asn-862 are each glycosylated (N-linked (GlcNAc...) asparagine).

It belongs to the glycosyl hydrolase 55 family.

Its subcellular location is the secreted. It catalyses the reaction Hydrolysis of (1-&gt;3)-beta-D-glucosidic linkages in (1-&gt;3)-beta-D-glucans.. Probable glucan endo-1,3-beta-glucosidase involved in the hydrolysis of fungal cell wall. Classified as a small-oligosaccharide-producing type based its the end products: glucose, laminaribiose or laminaritetraose. The polypeptide is Probable glucan endo-1,3-beta-glucosidase ARB_02077 (Arthroderma benhamiae (strain ATCC MYA-4681 / CBS 112371) (Trichophyton mentagrophytes)).